A 514-amino-acid polypeptide reads, in one-letter code: tRNA-2-methylthio-N(6)-dimethylallyladenosine synthase (514 aa).

The region spanning 68–186 is the MTTase N-terminal domain; the sequence is RTFLIKTYGC…LPEILEEAYL (119 aa). [4Fe-4S] cluster is bound by residues Cys77, Cys113, Cys147, Cys223, Cys227, and Cys230. The Radical SAM core domain occupies 209–439; the sequence is RDGHIKAWVN…NKKVGIYSQQ (231 aa). Positions 442 to 505 constitute a TRAM domain; that stretch reads SQYEGKIVTV…QYSLNGTFIQ (64 aa).

The protein belongs to the methylthiotransferase family. MiaB subfamily. As to quaternary structure, monomer. Requires [4Fe-4S] cluster as cofactor.

It is found in the cytoplasm. The enzyme catalyses N(6)-dimethylallyladenosine(37) in tRNA + (sulfur carrier)-SH + AH2 + 2 S-adenosyl-L-methionine = 2-methylsulfanyl-N(6)-dimethylallyladenosine(37) in tRNA + (sulfur carrier)-H + 5'-deoxyadenosine + L-methionine + A + S-adenosyl-L-homocysteine + 2 H(+). Catalyzes the methylthiolation of N6-(dimethylallyl)adenosine (i(6)A), leading to the formation of 2-methylthio-N6-(dimethylallyl)adenosine (ms(2)i(6)A) at position 37 in tRNAs that read codons beginning with uridine. The polypeptide is tRNA-2-methylthio-N(6)-dimethylallyladenosine synthase (Staphylococcus epidermidis (strain ATCC 35984 / DSM 28319 / BCRC 17069 / CCUG 31568 / BM 3577 / RP62A)).